The chain runs to 862 residues: Kinesin-like protein KIN-7J (862 aa).

Residues 9–331 enclose the Kinesin motor domain; the sequence is RIVVSVRLRP…LLFANCAKDV (323 aa). An ATP-binding site is contributed by 95 to 102; sequence GQTSSGKT. A coiled-coil region spans residues 340–415; the sequence is VMSDKALVKH…NFRKVASDGD (76 aa). 2 stretches are compositionally biased toward basic and acidic residues: residues 475–499 and 518–531; these read EEHE…KEVQ and PEKK…KHSE. Disordered regions lie at residues 475-532 and 596-643; these read EEHE…HSES and DDSA…STCN. Residues 598–610 are compositionally biased toward polar residues; it reads SASTTPSSETFRY. A compositionally biased stretch (basic and acidic residues) spans 613-629; it reads RRPEKVRKSLSPDEIAD.

It belongs to the TRAFAC class myosin-kinesin ATPase superfamily. Kinesin family. KIN-7 subfamily.

The protein is Kinesin-like protein KIN-7J of Oryza sativa subsp. japonica (Rice).